Here is a 290-residue protein sequence, read N- to C-terminus: MDKIIKSIAQSGAFRAYVLDSTETVALAQEKHNTLSSSTVALGRTLIANQILAANQKGDSKITVKVIGDSSFGHIISVADTKGHVKGYIQNTGVDIKKTATGEVLVGPFMGNGHFVTIIDYGTGNPYTSTTPLITGEIGEDFAYYLTESEQTPSAIGLNVLLDENDKVKVAGGFMVQVLPGASEEEIARYEKRLQEMPAISHLLASKNHVDALLEAIYGDEPYKRLSEEPLSFQCDCSRERFEAALMTLPKADLQAMIDEDKGAEIVCQFCGTKYQFNESDLEAIISDKA.

Intrachain disulfides connect cysteine 235–cysteine 237 and cysteine 268–cysteine 271.

The protein belongs to the HSP33 family. Under oxidizing conditions two disulfide bonds are formed involving the reactive cysteines. Under reducing conditions zinc is bound to the reactive cysteines and the protein is inactive.

Its subcellular location is the cytoplasm. Its function is as follows. Redox regulated molecular chaperone. Protects both thermally unfolding and oxidatively damaged proteins from irreversible aggregation. Plays an important role in the bacterial defense system toward oxidative stress. This chain is 33 kDa chaperonin, found in Streptococcus pyogenes serotype M1.